Here is a 529-residue protein sequence, read N- to C-terminus: Cytochrome P450 monooxygenase acuD (529 aa).

The chain crosses the membrane as a helical span at residues 8–28; the sequence is FAVIAASAAAVAGVLFLIYAA. Asparagine 81 is a glycosylation site (N-linked (GlcNAc...) asparagine). Position 449 (cysteine 449) interacts with heme.

This sequence belongs to the cytochrome P450 family. Heme serves as cofactor.

It is found in the endoplasmic reticulum membrane. It carries out the reaction 3-hydroxybenzyl alcohol + reduced [NADPH--hemoprotein reductase] + O2 = gentisyl alcohol + oxidized [NADPH--hemoprotein reductase] + H2O + H(+). The protein operates within secondary metabolite biosynthesis. In terms of biological role, cytochrome P450 monooxygenase; part of the gene cluster that mediates the biosynthesis of aculins. The pathway begins with the synthesis of 6-methylsalicylic acid by the polyketide synthase (PKS) acuA via condensation of acetate and malonate units. The 6-methylsalicylic acid decarboxylase acuB then catalyzes the decarboxylation of 6-methylsalicylic acid to yield m-cresol (also known as 3-methylphenol). These first reactions occur in the cytosol. The intermediate m-cresol is then transported into the endoplasmic reticulum where the cytochrome P450 monooxygenase acuC converts it to m-hydroxybenzyl alcohol, which is further converted to gentisyl alcohol by the cytochrome P450 monooxygenase acuD. Gentisyl alcohol is further oxidized by the oxidoreductase acuE that probably catalyzes hydroxylation of the aromatic ring. The aromatic system might then be opened by oxidation through a Baeyer-Villiger type of oxidation, which could be catalyzed by acuF, with the carboxylic acid at C-1 subsequently reduced to an aldehyde by acuG. Subsequently, a hemiacetal is formed, before the dehydrogenase acuH would reduce the double bond between C-4 and C-6. Finally, keto-enol tautomerism results in formation of aculinic acid, which exists as two diastereomers (both R/S configurations at C-1) by non-enzymatic hemiacetal formation. The carboxypeptidase acuI could be involved in the linking of aculinic acid to an aculene A moiety produced by the aculene biosynthesis cluster and which leads to the production of aculin A. AcuI may also be involved in the attachment of proline to aculinic acid to form epi-aculins A and B. The sequence is that of Cytochrome P450 monooxygenase acuD from Aspergillus aculeatus (strain ATCC 16872 / CBS 172.66 / WB 5094).